The following is a 37-amino-acid chain: Large ribosomal subunit protein bL36 (37 aa).

It belongs to the bacterial ribosomal protein bL36 family.

In Sulfurihydrogenibium sp. (strain YO3AOP1), this protein is Large ribosomal subunit protein bL36.